Consider the following 150-residue polypeptide: Large ribosomal subunit protein uL15 (150 aa).

The span at 1-15 shows a compositional bias: polar residues; sequence MNLSNLQPAEGSTHN. The disordered stretch occupies residues 1–53; the sequence is MNLSNLQPAEGSTHNQNKRVGRGEGSGKGGTAARGHKGAKSRSGYSKKIGFEG. The span at 23-32 shows a compositional bias: gly residues; that stretch reads GEGSGKGGTA.

This sequence belongs to the universal ribosomal protein uL15 family. As to quaternary structure, part of the 50S ribosomal subunit.

In terms of biological role, binds to the 23S rRNA. The polypeptide is Large ribosomal subunit protein uL15 (Flavobacterium johnsoniae (strain ATCC 17061 / DSM 2064 / JCM 8514 / BCRC 14874 / CCUG 350202 / NBRC 14942 / NCIMB 11054 / UW101) (Cytophaga johnsonae)).